The chain runs to 249 residues: Vitamin B12 import ATP-binding protein BtuD (249 aa).

Residues Met-5–Asn-233 enclose the ABC transporter domain. ATP is bound at residue Gly-33–Ser-40.

Belongs to the ABC transporter superfamily. Vitamin B12 importer (TC 3.A.1.13.1) family. As to quaternary structure, the complex is composed of two ATP-binding proteins (BtuD), two transmembrane proteins (BtuC) and a solute-binding protein (BtuF).

It localises to the cell inner membrane. The catalysed reaction is an R-cob(III)alamin(out) + ATP + H2O = an R-cob(III)alamin(in) + ADP + phosphate + H(+). Part of the ABC transporter complex BtuCDF involved in vitamin B12 import. Responsible for energy coupling to the transport system. This is Vitamin B12 import ATP-binding protein BtuD from Citrobacter koseri (strain ATCC BAA-895 / CDC 4225-83 / SGSC4696).